We begin with the raw amino-acid sequence, 496 residues long: Zinc finger protein PLAGL2 (496 aa).

6 C2H2-type zinc fingers span residues 68 to 92 (YSCP…MATH), 98 to 120 (HQCM…LQTH), 127 to 149 (LHCS…LAMH), 156 to 178 (LSCK…LKAH), 191 to 213 (HPCD…LVVH), and 219 to 242 (FLCQ…KKSH).

It belongs to the krueppel C2H2-type zinc-finger protein family.

The protein localises to the nucleus. Its function is as follows. Shows weak transcriptional activatory activity. In Homo sapiens (Human), this protein is Zinc finger protein PLAGL2 (PLAGL2).